The sequence spans 598 residues: Glutamine--fructose-6-phosphate aminotransferase [isomerizing] (598 aa).

Residue Cys2 is the Nucleophile; for GATase activity of the active site. The 217-residue stretch at 2 to 218 folds into the Glutamine amidotransferase type-2 domain; it reads CGIVGYIGNN…DLSLGYASKD (217 aa). 2 consecutive SIS domains span residues 277–421 and 450–588; these read VFDE…KRNL and LSKR…VDMP. The active-site For Fru-6P isomerization activity is Lys593.

Homodimer.

The protein resides in the cytoplasm. The enzyme catalyses D-fructose 6-phosphate + L-glutamine = D-glucosamine 6-phosphate + L-glutamate. In terms of biological role, catalyzes the first step in hexosamine metabolism, converting fructose-6P into glucosamine-6P using glutamine as a nitrogen source. The chain is Glutamine--fructose-6-phosphate aminotransferase [isomerizing] from Campylobacter jejuni subsp. jejuni serotype O:2 (strain ATCC 700819 / NCTC 11168).